Consider the following 83-residue polypeptide: Parvalbumin beta 3 (83 aa).

EF-hand domains follow at residues 13 to 48 and 52 to 83; these read KSND…FSAG and LTAG…LVKA. Ca(2+) is bound by residues Asp26, Asp28, Ser30, Phe32, Glu34, Glu37, Asp65, Asp67, Asp69, Met71, and Glu76.

The protein belongs to the parvalbumin family.

Its function is as follows. In muscle, parvalbumin is thought to be involved in relaxation after contraction. It binds two calcium ions. This chain is Parvalbumin beta 3, found in Macruronus novaezelandiae (Blue grenadier).